Consider the following 306-residue polypeptide: Replication termination factor 2 (306 aa).

Residues 192–306 are disordered; sequence RAKLEKKTKK…HWVTHTSYCF (115 aa). Basic and acidic residues predominate over residues 226–240; the sequence is GKSEEADPDPREKKS. Phosphoserine is present on S287.

Belongs to the rtf2 family. As to quaternary structure, interacts with DDI2; probably also interacts with DDI1. In terms of processing, undergoes proteasomal degradation, via DDI1 and DDI2. Removal from stalled replisomes and degradation are required for genome stability.

The protein resides in the chromosome. Functionally, replication termination factor which is a component of the elongating replisome. Required for ATR pathway signaling upon DNA damage and has a positive activity during DNA replication. Might function to facilitate fork pausing at replication fork barriers like the rDNA. May be globally required to stimulate ATR signaling after the fork stalls or encounters a lesion. Interacts with nascent DNA. The polypeptide is Replication termination factor 2 (Rattus norvegicus (Rat)).